Consider the following 357-residue polypeptide: Protein MGF 360-14L (357 aa).

This sequence belongs to the asfivirus MGF 360 family. In terms of assembly, interacts with host IRF3 and TRIM21; these interactions mediates degradation of IRF3 through TRIM21 and ubiquitin-meditated proteolysis.

The protein resides in the host cytoplasm. In terms of biological role, plays a role in virus cell tropism, and may be required for efficient virus replication in macrophages. Also inhibits the host cGAS/STING-mediated type I interferon production by inducing host IRF3 degradation through the proteasome pathway. The protein is Protein MGF 360-14L of Ornithodoros (relapsing fever ticks).